The sequence spans 71 residues: Permeability factor 2 (71 aa).

2 disulfide bridges follow: cysteine 7/cysteine 33 and cysteine 9/cysteine 49.

The protein belongs to the intercrine alpha (chemokine CxC) family. As to quaternary structure, homodimer.

It localises to the secreted. In terms of biological role, has chemotactic activity for neutrophils. This chain is Permeability factor 2, found in Oryctolagus cuniculus (Rabbit).